Reading from the N-terminus, the 226-residue chain is uncharacterized protein (226 aa).

Residues 121 to 163 are a coiled coil; the sequence is TVDELIKTIEKELNKVKKSRKNREKKTNEVEEIIEELIEEDDI.

This is an uncharacterized protein from Methanocaldococcus jannaschii (strain ATCC 43067 / DSM 2661 / JAL-1 / JCM 10045 / NBRC 100440) (Methanococcus jannaschii).